Here is a 417-residue protein sequence, read N- to C-terminus: MAWFSLHLLHLLWAAAGTSTWARSSCSVPQAAQHLVDGLQVLLEDSVSSAAPPNPSVLIAMNLAGALSAEARELLADRLGASDSAGLSVGQLALTIMALNSSCRDPGNKVSVLYGQMEAWPPSSPSAPAWTFYGPSLAVLALCQEHPGRALPVAARLAKILAAGLSPFNTDTGAMVTLALTCMYNKIPEGSEEGYRTLFSQVLKDVVENISMRIKDNGIIGDVYSTGLAMQALSVTPEPPNKEWDCKKTMDTILKEIEQGKFHNPMSIAQILPSLKGKTYLDVPYVSCSPGHQVQPTLPSQPSPVPTSASNITVAYTINNQLKGVELVFNETIDVSVKDGSVLLVVLEEAQRRNPMFKFVTTMTSWGLVVSSINNIAESVHDRTYWQFLSGKTPLNEGVADYTPRDHEHITANFTQY.

The first 22 residues, 1–22, serve as a signal peptide directing secretion; it reads MAWFSLHLLHLLWAAAGTSTWA. 3 disulfide bridges follow: C26–C246, C103–C288, and C143–C182. N-linked (GlcNAc...) asparagine glycosylation occurs at N100. Position 171 (D171) interacts with cob(II)alamin. S191 is subject to Phosphoserine. N209 is a glycosylation site (N-linked (GlcNAc...) asparagine). Cob(II)alamin contacts are provided by D222 and Q270. N311 and N330 each carry an N-linked (GlcNAc...) asparagine glycan. Residues 365–370 and 386–395 each bind cob(II)alamin; these read SWGLVV and WQFLSGKTPL. The N-linked (GlcNAc...) asparagine glycan is linked to N413.

It belongs to the eukaryotic cobalamin transport proteins family. In terms of assembly, interacts with CUBN (via CUB domains).

The protein resides in the secreted. In terms of biological role, promotes absorption of the essential vitamin cobalamin (Cbl) in the ileum. After interaction with CUBN, the CBLIF-cobalamin complex is internalized via receptor-mediated endocytosis. This chain is Cobalamin binding intrinsic factor (CBLIF), found in Canis lupus familiaris (Dog).